A 327-amino-acid polypeptide reads, in one-letter code: Ribose 1,5-bisphosphate isomerase (327 aa).

Residues 25-28 (RGAA) and Arg-68 contribute to the substrate site. Catalysis depends on Cys-133, which acts as the Proton acceptor. Catalysis depends on Asp-202, which acts as the Proton donor. Substrate-binding positions include 212-213 (NK) and Lys-238.

This sequence belongs to the eIF-2B alpha/beta/delta subunits family. R15P isomerase subfamily.

It catalyses the reaction alpha-D-ribose 1,5-bisphosphate = D-ribulose 1,5-bisphosphate. Its function is as follows. Isomerase involved in the non-carboxylating pentose bisphosphate pathway, a nucleoside degradation pathway present in some halophilic archaea. Catalyzes the isomerization of ribose 1,5-bisphosphate (R15P) to ribulose 1,5-bisphosphate (RuBP). The sequence is that of Ribose 1,5-bisphosphate isomerase from Haloterrigena turkmenica (strain ATCC 51198 / DSM 5511 / JCM 9101 / NCIMB 13204 / VKM B-1734 / 4k) (Halococcus turkmenicus).